The following is a 509-amino-acid chain: Maturase K (509 aa).

The protein belongs to the intron maturase 2 family. MatK subfamily.

The protein localises to the plastid. Its subcellular location is the chloroplast. Functionally, usually encoded in the trnK tRNA gene intron. Probably assists in splicing its own and other chloroplast group II introns. The sequence is that of Maturase K from Nicotiana bigelovii (Bigelov's tobacco).